Here is a 430-residue protein sequence, read N- to C-terminus: NAD(P)(+) glycohydrolase toxin Tse6 (430 aa).

3 helical membrane passes run 17 to 37, 46 to 66, and 193 to 213; these read FGVA…AAVV, LAAV…FQIV, and LLLA…IGGL.

As to quaternary structure, interacts with Tsi6, VgrG1a, EagT6 and EF-Tu.

The protein resides in the membrane. The enzyme catalyses NAD(+) + H2O = ADP-D-ribose + nicotinamide + H(+). In terms of biological role, type VI secretion exported toxin that acts as a glycohydrolase on bacterial target cells and degrades the essential dinucleotides NAD(+) and NADP(+), thereby inducing bacteriostasis. The activity resides in the C-terminal region that is initially neutralized by the cognate immunity protein Tsi6. The polypeptide is NAD(P)(+) glycohydrolase toxin Tse6 (Pseudomonas aeruginosa (strain ATCC 15692 / DSM 22644 / CIP 104116 / JCM 14847 / LMG 12228 / 1C / PRS 101 / PAO1)).